Reading from the N-terminus, the 53-residue chain is UPF0391 membrane protein Ent638_0536 (53 aa).

2 helical membrane passes run 4–24 and 27–47; these read WGIIFLVIALIAAALGFGGLA and AAWAAKLVFVVGIVLFLVSLF.

Belongs to the UPF0391 family.

The protein resides in the cell membrane. This chain is UPF0391 membrane protein Ent638_0536, found in Enterobacter sp. (strain 638).